The primary structure comprises 164 residues: Transcriptional repressor NrdR (164 aa).

A zinc finger lies at 3 to 34; it reads CPFCRHDDTQVVDSRVSEDGAAIRRRRRCPAC. The ATP-cone domain maps to 49 to 139; the sequence is PSVVKKDGSR…VYRRFEDVSE (91 aa).

Belongs to the NrdR family. The cofactor is Zn(2+).

Negatively regulates transcription of bacterial ribonucleotide reductase nrd genes and operons by binding to NrdR-boxes. The chain is Transcriptional repressor NrdR from Paraburkholderia phymatum (strain DSM 17167 / CIP 108236 / LMG 21445 / STM815) (Burkholderia phymatum).